A 72-amino-acid chain; its full sequence is Translation initiation factor IF-1 (72 aa).

Positions 2 to 72 (AKEDVIEIQG…TKGRITYRFK (71 aa)) constitute an S1-like domain.

Belongs to the IF-1 family. In terms of assembly, component of the 30S ribosomal translation pre-initiation complex which assembles on the 30S ribosome in the order IF-2 and IF-3, IF-1 and N-formylmethionyl-tRNA(fMet); mRNA recruitment can occur at any time during PIC assembly.

The protein localises to the cytoplasm. Functionally, one of the essential components for the initiation of protein synthesis. Stabilizes the binding of IF-2 and IF-3 on the 30S subunit to which N-formylmethionyl-tRNA(fMet) subsequently binds. Helps modulate mRNA selection, yielding the 30S pre-initiation complex (PIC). Upon addition of the 50S ribosomal subunit IF-1, IF-2 and IF-3 are released leaving the mature 70S translation initiation complex. The chain is Translation initiation factor IF-1 from Lactiplantibacillus plantarum (strain ATCC BAA-793 / NCIMB 8826 / WCFS1) (Lactobacillus plantarum).